The primary structure comprises 257 residues: MNDIWWQTIGEGDCHLVLLHGWGLNAQVWDCITPQLASHFTLHLVDLPGYGRSGGFGAMSLEAMAQRVLEQAPPQAVWLGWSLGGLVASQVAIMRPERVQALVTVASSPCFAARDDWPGIKPEVLAGFQQQLSDDFQRTVERFLALQTMGTESARQDARALKQAVLSLPMPSAEALNGGLEILRTVDLRQALVRLPMPFLRLYGRLDGLVPRKIVPLLDDLWPESESILFDKAAHAPFVSHPAAFCEPLLALKTRLG.

One can recognise an AB hydrolase-1 domain in the interval 15 to 241; sequence HLVLLHGWGL…KAAHAPFVSH (227 aa). Residues tryptophan 22, 82–83, and 143–147 contribute to the substrate site; these read SL and FLALQ. The Nucleophile role is filled by serine 82. Catalysis depends on residues aspartate 207 and histidine 235. Histidine 235 contributes to the substrate binding site.

This sequence belongs to the AB hydrolase superfamily. Carboxylesterase BioH family. Monomer.

It is found in the cytoplasm. It catalyses the reaction 6-carboxyhexanoyl-[ACP] methyl ester + H2O = 6-carboxyhexanoyl-[ACP] + methanol + H(+). It participates in cofactor biosynthesis; biotin biosynthesis. Its function is as follows. The physiological role of BioH is to remove the methyl group introduced by BioC when the pimeloyl moiety is complete. It allows to synthesize pimeloyl-ACP via the fatty acid synthetic pathway through the hydrolysis of the ester bonds of pimeloyl-ACP esters. This is Pimeloyl-[acyl-carrier protein] methyl ester esterase from Klebsiella pneumoniae subsp. pneumoniae (strain ATCC 700721 / MGH 78578).